Consider the following 178-residue polypeptide: uncharacterized protein (178 aa).

This is an uncharacterized protein from Saccharomyces cerevisiae (strain ATCC 204508 / S288c) (Baker's yeast).